A 244-amino-acid polypeptide reads, in one-letter code: Myosin-7 (244 aa).

Positions 1 to 244 (VEQTERSRKL…DIGTKGLNEE (244 aa)) are rodlike tail (S2 and LMM domains). The stretch at 1-244 (VEQTERSRKL…DIGTKGLNEE (244 aa)) forms a coiled coil. The interval 216–244 (EERADIAESQVNKLRAKSRDIGTKGLNEE) is disordered. Over residues 232 to 244 (KSRDIGTKGLNEE) the composition is skewed to basic and acidic residues.

As to quaternary structure, muscle myosin is a hexameric protein that consists of 2 heavy chain subunits (MHC), 2 alkali light chain subunits (MLC) and 2 regulatory light chain subunits (MLC-2). Interacts with ECPAS. Interacts (via C-terminus) with LRRC39.

It is found in the cytoplasm. Its subcellular location is the myofibril. It localises to the sarcomere. In terms of biological role, myosins are actin-based motor molecules with ATPase activity essential for muscle contraction. Forms regular bipolar thick filaments that, together with actin thin filaments, constitute the fundamental contractile unit of skeletal and cardiac muscle. In Papio hamadryas (Hamadryas baboon), this protein is Myosin-7 (MYH7).